Here is a 170-residue protein sequence, read N- to C-terminus: Lipoprotein signal peptidase (170 aa).

3 helical membrane passes run 5-25, 70-90, and 98-118; these read VYHQ…LDQG, WFFT…ICRV, and AFAL…RIIH. Active-site residues include Asp123 and Asp141. The helical transmembrane segment at 137-157 threads the bilayer; that stretch reads FNLADAAISLGAMVLIADLFI.

This sequence belongs to the peptidase A8 family.

Its subcellular location is the cell inner membrane. The catalysed reaction is Release of signal peptides from bacterial membrane prolipoproteins. Hydrolyzes -Xaa-Yaa-Zaa-|-(S,diacylglyceryl)Cys-, in which Xaa is hydrophobic (preferably Leu), and Yaa (Ala or Ser) and Zaa (Gly or Ala) have small, neutral side chains.. The protein operates within protein modification; lipoprotein biosynthesis (signal peptide cleavage). Functionally, this protein specifically catalyzes the removal of signal peptides from prolipoproteins. The chain is Lipoprotein signal peptidase from Cellvibrio japonicus (strain Ueda107) (Pseudomonas fluorescens subsp. cellulosa).